The chain runs to 440 residues: Chromosome partition protein MukF (440 aa).

The leucine-zipper stretch occupies residues 208–236; it reads LSETSGTLRELQDTLEAAGDKLQANLLRI.

The protein belongs to the MukF family. In terms of assembly, interacts, and probably forms a ternary complex, with MukE and MukB via its C-terminal region. The complex formation is stimulated by calcium or magnesium. It is required for an interaction between MukE and MukB.

Its subcellular location is the cytoplasm. It is found in the nucleoid. Its function is as follows. Involved in chromosome condensation, segregation and cell cycle progression. May participate in facilitating chromosome segregation by condensation DNA from both sides of a centrally located replisome during cell division. Not required for mini-F plasmid partitioning. Probably acts via its interaction with MukB and MukE. Overexpression results in anucleate cells. It has a calcium binding activity. This is Chromosome partition protein MukF from Salmonella arizonae (strain ATCC BAA-731 / CDC346-86 / RSK2980).